Consider the following 308-residue polypeptide: Olfactory receptor 5H8 (308 aa).

Over Met-1–Phe-28 the chain is Extracellular. The chain crosses the membrane as a helical span at residues Leu-29–Ile-49. Over Trp-50–His-56 the chain is Cytoplasmic. Residues Ile-57 to Val-77 traverse the membrane as a helical segment. The Extracellular segment spans residues Thr-78–Lys-98. Cysteines 97 and 179 form a disulfide. The helical transmembrane segment at Ile-99–Ala-119 threads the bilayer. Residues Tyr-120–Pro-133 lie on the Cytoplasmic side of the membrane. Residues Val-134 to Leu-154 form a helical membrane-spanning segment. The Extracellular segment spans residues His-155–Asn-195. A helical transmembrane segment spans residues Phe-196 to Val-216. At Ser-217–Ser-238 the chain is on the cytoplasmic side. A helical transmembrane segment spans residues Thr-239–Val-259. The Extracellular portion of the chain corresponds to His-260–Asp-270. A helical transmembrane segment spans residues Met-271–Leu-291. The Cytoplasmic portion of the chain corresponds to Arg-292 to Val-308.

It belongs to the G-protein coupled receptor 1 family.

It localises to the cell membrane. Odorant receptor. This Homo sapiens (Human) protein is Olfactory receptor 5H8.